The sequence spans 358 residues: DNA replication and repair protein RecF (358 aa).

Residue glycine 30–threonine 37 participates in ATP binding.

It belongs to the RecF family.

The protein resides in the cytoplasm. Functionally, the RecF protein is involved in DNA metabolism; it is required for DNA replication and normal SOS inducibility. RecF binds preferentially to single-stranded, linear DNA. It also seems to bind ATP. This Actinobacillus succinogenes (strain ATCC 55618 / DSM 22257 / CCUG 43843 / 130Z) protein is DNA replication and repair protein RecF.